Reading from the N-terminus, the 68-residue chain is uncharacterized protein (68 aa).

The interval 1–42 is disordered; sequence MHLCQNGHYYKPHRASAEKVPYLKKKKKNSRNEGKAKKKNEK.

This is an uncharacterized protein from Saccharomyces cerevisiae (strain ATCC 204508 / S288c) (Baker's yeast).